A 2377-amino-acid chain; its full sequence is Serine/threonine-protein kinase WNK1 (2377 aa).

2 disordered regions span residues 1-79 (MSDG…RFFR) and 93-203 (LPGL…QQDD). Residues Thr17 and Thr58 each carry the phosphothreonine modification. Over residues 48 to 64 (RTEEYRRRRHTMDKDSR) the composition is skewed to basic and acidic residues. 2 stretches are compositionally biased toward low complexity: residues 101–111 (PQPSVPAVVPQ) and 127–141 (VASQ…AASP). Over residues 149–158 (SATTTVPSST) the composition is skewed to polar residues. 2 positions are modified to phosphoserine: Ser165 and Ser172. Residues 221–479 (LKFDIEIGRG…IKDLLNHAFF (259 aa)) form the Protein kinase domain. Ser231 contacts ATP. Residues Phe283 and Leu299 each coordinate chloride. Residues 301–304 (TELM) and Lys351 contribute to the ATP site. Asp368 functions as the Proton acceptor in the catalytic mechanism. Residues Leu369 and Leu371 each contribute to the chloride site. Phosphoserine; by autocatalysis is present on residues Ser378 and Ser382. Residues 488–555 (ELAEEDDGEK…VCEGDHKTMA (68 aa)) form an autoinhibitory domain region. Over residues 573-588 (QLVREEQEKRKQEESS) the composition is skewed to basic and acidic residues. Disordered regions lie at residues 573–782 (QLVR…SAGT) and 1013–1114 (PAVS…SRPK). Polar residues-rich tracts occupy residues 593 to 628 (NEQQ…STQV), 638 to 705 (HQQL…QSQP), and 713 to 733 (SMAQ…VLSS). The interaction with KLHL3 stretch occupies residues 629–639 (EPEEPEADQHQ). Low complexity predominate over residues 734–746 (QPIQHPQQQGIQP). The segment covering 747-782 (TVPSQQAVQYSLPQAASSSEGTTAQPVSQPQVSAGT) has biased composition (polar residues). Residues 1018–1028 (TQQPPTTSSQQ) show a composition bias toward low complexity. The span at 1029–1038 (AVLESTQGVS) shows a compositional bias: polar residues. Positions 1042-1058 (PPEQTPITQSQPTQPVP) are enriched in low complexity. The span at 1075-1085 (SDGNENAPSSS) shows a compositional bias: polar residues. Residues 1093 to 1114 (TKRHYRKSVRSRSRHEKTSRPK) show a composition bias toward basic residues. The RFXV motif 1 signature appears at 1252-1255 (RFIV). Ser1256 is subject to Phosphoserine. Disordered regions lie at residues 1726-1760 (GQVS…TVVP) and 1818-1847 (TMSS…SSGA). The span at 1738–1748 (PVGTATGVKPG) shows a compositional bias: low complexity. A Phosphothreonine modification is found at Thr1843. Residues 1854–1857 (RFQV) carry the RFXV motif 2 motif. A disordered region spans residues 1860–1945 (TMDDAQKERK…TKVGRFQVTT (86 aa)). A compositionally biased stretch (basic and acidic residues) spans 1863–1879 (DAQKERKNRSEDTKSVH). Residues 1882–1900 (SSTSESSVLSSSSPESTLV) show a composition bias toward low complexity. 2 consecutive short sequence motifs (RFXV motif) follow at residues 1940-1943 (RFQV) and 1952-1955 (RFSV). The segment covering 1959 to 1969 (EDKVTELKKEG) has biased composition (basic and acidic residues). Disordered stretches follow at residues 1959–1984 (EDKV…QTVI), 1989–2008 (PKKE…PSSD), 2015–2064 (SRGT…DIED), 2107–2191 (VIIP…NLYS), and 2203–2239 (SLSA…SRKG). Ser1973 bears the Phosphoserine mark. Over residues 1989 to 1998 (PKKEKPELAE) the composition is skewed to basic and acidic residues. Phosphoserine is present on residues Ser2006, Ser2007, Ser2022, Ser2024, and Ser2027. Residues 2035 to 2057 (SLPVQNLSQSLSNSFNSSYMSSD) are compositionally biased toward low complexity. Ser2116 carries the phosphoserine modification. Positions 2117–2129 (GRRRRPTKSKGSK) are enriched in basic residues. Low complexity predominate over residues 2130–2140 (SSRSSSLGNKS). Positions 2141–2191 (PQLSGNLSGQSGTSVLHPQQTLHPAGNTPETGHNQLLQPLKPSPSSDNLYS) are enriched in polar residues. Positions 2208 to 2232 (GQGTSSTNTVGGTVSSQAAQAQPPA) are enriched in low complexity. The segment at 2236-2256 (SRKGTFTDDLHKLVDNWARDA) is amphipathic alpha-helix. Phosphoserine occurs at positions 2265 and 2281. Residues 2325 to 2344 (PAPFGTQWSGTGGPAPQPLG) form a disordered region. A phosphoserine mark is found at Ser2365 and Ser2367.

This sequence belongs to the protein kinase superfamily. Ser/Thr protein kinase family. WNK subfamily. As to quaternary structure, interacts with WNK3. Interacts with WNK4; inhibiting the activity of WNK4. Interacts with SGK1; promoting its activation. Associates with the mTORC2 complex. Interacts with UVRAG. In terms of assembly, interacts with isoform 1; inhibiting isoform 1 activity. Mg(2+) serves as cofactor. Autophosphorylated at Ser-378 and Ser-382, promoting its activity. Autophosphorylation at Ser-382 is inhibited by intracellular calcium. Phosphorylation at Thr-58 increases ability to activate SGK1. Post-translationally, ubiquitinated by the BCR(KLHL3) complex, leading to its degradation. Also ubiquitinated by the BCR(KLHL2) complex. In terms of processing, may be O-glycosylated. Widely expressed in both adult and embryonic tissue, with highest levels observed in the testis and lower levels in heart, lung, kidney, placenta, brain and skeletal muscle. Expressed in pancreatic duct. Two isoforms are expressed in heart, a single shorter isoform in the kidney. Locates to the distal convoluted tubule, the medullary collecting duct and the cortical collecting duct of the kidney. In terms of tissue distribution, restricted to the nervous system, expressed preferentially in sensory neurons than in motor neurons and in general more abundant in axons than in cell bodies (at protein level). In the DRG, predominantly expressed in the satellite cells that envelop sensory neurons, but low expression also observed in the cell bodies of neurons (at protein level). In the sciatic nerve, expressed in the Schwann cells that surround axons and in a mosaic distribution of axons (at protein level). In the spinal cord, expressed in superficial layers (LI and LII), as well as in the fibers of the Lissauer tract (at protein level). Also detected in the axon fibers of dorsolateral funiculus and lateral funiculus (at protein level).

It localises to the cytoplasm. The protein localises to the nucleus. It is found in the cytoskeleton. The protein resides in the spindle. The catalysed reaction is L-seryl-[protein] + ATP = O-phospho-L-seryl-[protein] + ADP + H(+). It catalyses the reaction L-threonyl-[protein] + ATP = O-phospho-L-threonyl-[protein] + ADP + H(+). Activated in response to hyperosmotic stress: cell shrinkage promotes formation of a membraneless compartment that concentrates WNK1 with its substrates, OXSR1/OSR1 and STK39/SPAK. Activation requires autophosphorylation of Ser-382 and, to a lower extent, Ser-378. Autophosphorylation and subsequent activation is inhibited by increases in intracellular ionic strength: Cl(-) potently inhibits WNK1 kinase activity via direct binding. Also inhibited by K(+) ions. Serine/threonine-protein kinase component of the WNK1-SPAK/OSR1 kinase cascade, which acts as a key regulator of blood pressure and regulatory volume increase by promoting ion influx. WNK1 mediates regulatory volume increase in response to hyperosmotic stress by acting as a molecular crowding sensor, which senses cell shrinkage and mediates formation of a membraneless compartment by undergoing liquid-liquid phase separation. The membraneless compartment concentrates WNK1 with its substrates, OXSR1/OSR1 and STK39/SPAK, promoting WNK1-dependent phosphorylation and activation of downstream kinases OXSR1/OSR1 and STK39/SPAK. Following activation, OXSR1/OSR1 and STK39/SPAK catalyze phosphorylation of ion cotransporters SLC12A1/NKCC2, SLC12A2/NKCC1, SLC12A5/KCC2 and SLC12A6/KCC3, regulating their activity. Phosphorylation of Na-K-Cl cotransporters SLC12A2/NKCC1 and SLC12A2/NKCC1 promote their activation and ion influx; simultaneously, phosphorylation of K-Cl cotransporters SLC12A5/KCC2 and SLC12A6/KCC3 inhibit their activity, blocking ion efflux. Also acts as a regulator of angiogenesis in endothelial cells. Also acts independently of the WNK1-SPAK/OSR1 kinase cascade by catalyzing phosphorylation of other substrates, such as SYT2, PCF11 and NEDD4L. Mediates phosphorylation of SYT2, regulating SYT2 association with phospholipids and membrane-binding. Regulates mRNA export in the nucleus by mediating phosphorylation of PCF11, thereby decreasing the association between PCF11 and POLR2A/RNA polymerase II and promoting mRNA export to the cytoplasm. Acts as a negative regulator of autophagy. Required for the abscission step during mitosis, independently of the WNK1-SPAK/OSR1 kinase cascade. WNK1 may also play a role in actin cytoskeletal reorganization. Also acts as a scaffold protein independently of its protein kinase activity: negatively regulates cell membrane localization of various transporters and channels, such as SLC4A4, SLC26A6, SLC26A9, TRPV4 and CFTR. Involved in the regulation of epithelial Na(+) channel (ENaC) by promoting activation of SGK1 in a kinase-independent manner: probably acts as a scaffold protein that promotes the recruitment of SGK1 to the mTORC2 complex in response to chloride, leading to mTORC2-dependent phosphorylation and activation of SGK1. Acts as an assembly factor for the ER membrane protein complex independently of its protein kinase activity: associates with EMC2 in the cytoplasm via its amphipathic alpha-helix, and prevents EMC2 ubiquitination and subsequent degradation, thereby promoting EMC2 stabilization. Functionally, kinase-defective isoform specifically expressed in kidney, which acts as a dominant-negative regulator of the longer isoform 1. Does not directly inhibit WNK4 and has no direct effect on sodium and chloride ion transport. Down-regulates sodium-chloride cotransporter activity indirectly by inhibiting isoform 1, it associates with isoform 1 and attenuates its kinase activity. In kidney, may play an important role regulating sodium and potassium balance. This Mus musculus (Mouse) protein is Serine/threonine-protein kinase WNK1.